Consider the following 145-residue polypeptide: UPF0201 protein STK_09490 (145 aa).

This sequence belongs to the UPF0201 family.

This chain is UPF0201 protein STK_09490, found in Sulfurisphaera tokodaii (strain DSM 16993 / JCM 10545 / NBRC 100140 / 7) (Sulfolobus tokodaii).